A 413-amino-acid polypeptide reads, in one-letter code: Multifunctional CCA protein (413 aa).

The ATP site is built by Gly-8 and Arg-11. CTP is bound by residues Gly-8 and Arg-11. 2 residues coordinate Mg(2+): Asp-21 and Asp-23. The ATP site is built by Arg-91, Arg-137, and Arg-140. Residues Arg-91, Arg-137, and Arg-140 each contribute to the CTP site. Positions 228–329 (TGVHTLMTLS…VKLFDAIDAW (102 aa)) constitute an HD domain.

It belongs to the tRNA nucleotidyltransferase/poly(A) polymerase family. Bacterial CCA-adding enzyme type 1 subfamily. As to quaternary structure, monomer. Can also form homodimers and oligomers. The cofactor is Mg(2+). Ni(2+) serves as cofactor.

The catalysed reaction is a tRNA precursor + 2 CTP + ATP = a tRNA with a 3' CCA end + 3 diphosphate. The enzyme catalyses a tRNA with a 3' CCA end + 2 CTP + ATP = a tRNA with a 3' CCACCA end + 3 diphosphate. Functionally, catalyzes the addition and repair of the essential 3'-terminal CCA sequence in tRNAs without using a nucleic acid template. Adds these three nucleotides in the order of C, C, and A to the tRNA nucleotide-73, using CTP and ATP as substrates and producing inorganic pyrophosphate. tRNA 3'-terminal CCA addition is required both for tRNA processing and repair. Also involved in tRNA surveillance by mediating tandem CCA addition to generate a CCACCA at the 3' terminus of unstable tRNAs. While stable tRNAs receive only 3'-terminal CCA, unstable tRNAs are marked with CCACCA and rapidly degraded. This is Multifunctional CCA protein from Salmonella typhi.